A 209-amino-acid chain; its full sequence is Ribosomal RNA large subunit methyltransferase E (209 aa).

5 residues coordinate S-adenosyl-L-methionine: Gly-63, Trp-65, Asp-83, Asp-99, and Asp-124. The active-site Proton acceptor is the Lys-164.

This sequence belongs to the class I-like SAM-binding methyltransferase superfamily. RNA methyltransferase RlmE family.

The protein localises to the cytoplasm. The enzyme catalyses uridine(2552) in 23S rRNA + S-adenosyl-L-methionine = 2'-O-methyluridine(2552) in 23S rRNA + S-adenosyl-L-homocysteine + H(+). Functionally, specifically methylates the uridine in position 2552 of 23S rRNA at the 2'-O position of the ribose in the fully assembled 50S ribosomal subunit. The polypeptide is Ribosomal RNA large subunit methyltransferase E (Shewanella baltica (strain OS223)).